The chain runs to 224 residues: Cardosin-E (224 aa).

In terms of domain architecture, Peptidase A1 spans 1–221 (DSGSAIVALT…DYGNLLVGFA (221 aa)). Asp35 is an active-site residue. Cys125 and Cys129 are joined by a disulfide. The active site involves Asp134.

It belongs to the peptidase A1 family. As to quaternary structure, heterodimer of a light chain and a heavy chain. An intermediate form is produced first, and undergoes proteolytic processing to remove the internal plant-specific insert (PSI) and the propeptide. In terms of processing, N-glycosylated. Pistils.

The protein resides in the microsome membrane. The protein localises to the protein storage vacuole. It is found in the secreted. It localises to the cell wall. Its subcellular location is the extracellular space. The protein resides in the extracellular matrix. Its activity is regulated as follows. Inhibited by pepstatin. Aspartic protease with a high preference for bonds between hydrophobic residues. The polypeptide is Cardosin-E (Cynara cardunculus (Cardoon)).